Reading from the N-terminus, the 355-residue chain is Uroporphyrinogen decarboxylase (355 aa).

Residues 27-31 (RQAGR), D78, Y155, S210, and H328 each bind substrate.

Belongs to the uroporphyrinogen decarboxylase family. In terms of assembly, homodimer.

It is found in the cytoplasm. The catalysed reaction is uroporphyrinogen III + 4 H(+) = coproporphyrinogen III + 4 CO2. It functions in the pathway porphyrin-containing compound metabolism; protoporphyrin-IX biosynthesis; coproporphyrinogen-III from 5-aminolevulinate: step 4/4. Its function is as follows. Catalyzes the decarboxylation of four acetate groups of uroporphyrinogen-III to yield coproporphyrinogen-III. The protein is Uroporphyrinogen decarboxylase of Azotobacter vinelandii (strain DJ / ATCC BAA-1303).